Here is a 532-residue protein sequence, read N- to C-terminus: Berberine bridge enzyme-like 23 (532 aa).

A signal peptide spans Met-1 to Ser-22. The cysteines at positions 36 and 102 are disulfide-linked. A glycan (N-linked (GlcNAc...) asparagine) is linked at Asn-78. Residues Thr-80–Val-256 form the FAD-binding PCMH-type domain. Residues His-117–Cys-180 constitute a cross-link (6-(S-cysteinyl)-8alpha-(pros-histidyl)-FAD (His-Cys)). N-linked (GlcNAc...) asparagine glycosylation is found at Asn-272 and Asn-487.

This sequence belongs to the oxygen-dependent FAD-linked oxidoreductase family. It depends on FAD as a cofactor. The FAD cofactor is bound via a bicovalent 6-S-cysteinyl, 8alpha-N1-histidyl FAD linkage. Accumulates in cell walls of etiolated hypocotyls.

Its subcellular location is the secreted. The protein localises to the cell wall. The sequence is that of Berberine bridge enzyme-like 23 from Arabidopsis thaliana (Mouse-ear cress).